We begin with the raw amino-acid sequence, 346 residues long: Inner membrane protein YnjI (346 aa).

Over 1 to 38 the chain is Periplasmic; sequence MKKVLLQNHPGSEKYSFNGWEIFNSNFERMIKENKAML. A helical membrane pass occupies residues 39–59; it reads LCKWGFYLTCVVAVMFVFAAI. Residues 60-68 are Cytoplasmic-facing; that stretch reads TSNGLNERG. The helical transmembrane segment at 69–89 threads the bilayer; the sequence is LITAGCSFLYLLIMMGLIVRA. The Periplasmic portion of the chain corresponds to 90-234; the sequence is GFKAKKEQLH…DCANHSSGKS (145 aa). Residues 235–255 form a helical membrane-spanning segment; it reads SAKLIWAAELSWMISISSTAF. Topologically, residues 256-346 are cytoplasmic; it reads QNGTIEEELA…PWGASSVKYS (91 aa).

Its subcellular location is the cell inner membrane. This Escherichia coli (strain K12) protein is Inner membrane protein YnjI (ynjI).